Here is a 437-residue protein sequence, read N- to C-terminus: Vacuolar protein sorting-associated protein 4A (437 aa).

The MIT domain maps to 2–80 (TTSTLQKAID…KDYLRNKEKH (79 aa)). At K8 the chain carries N6-acetyllysine. The stretch at 15–37 (KATEEDKAKNYEEALRLYQHAVE) forms a coiled coil. The interval 75–106 (RNKEKHGKKPVKENQSEGKGSDSDSEGDNPEK) is disordered. Basic and acidic residues predominate over residues 84-96 (PVKENQSEGKGSD). S95 and S97 each carry phosphoserine. 167 to 174 (GPPGTGKS) serves as a coordination point for ATP.

Belongs to the AAA ATPase family. Proposed to be monomeric or homodimeric in nucleotide-free form and to oligomerize upon binding to ATP to form two stacked hexameric or heptameric rings with a central pore through which ESCRT-III substrates are translocated in an ATP-dependent manner. Interacts with CHMP1A, CHMP1B, CHMP2A, CHMP2B, CHMP3, CHMP4A, CHMP4B, CHMP4C and CHMP6. Interacts with VPS4B; the interaction suggests a heteromeric assembly with VPS4B. Interacts with SPAST. Interacts with IST1. Interacts with ZFYVE19/ANCHR; leading to retain it at midbody. In terms of tissue distribution, highly expressed in testis and moderately in heart and brain. Not detected in spleen, lung, liver, skeletal muscle or kidney.

The protein resides in the late endosome membrane. It is found in the midbody. Its subcellular location is the cytoplasm. The protein localises to the cytoskeleton. It localises to the spindle. It catalyses the reaction ATP + H2O = ADP + phosphate + H(+). In terms of biological role, involved in late steps of the endosomal multivesicular bodies (MVB) pathway. Recognizes membrane-associated ESCRT-III assemblies and catalyzes their disassembly, possibly in combination with membrane fission. Redistributes the ESCRT-III components to the cytoplasm for further rounds of MVB sorting. MVBs contain intraluminal vesicles (ILVs) that are generated by invagination and scission from the limiting membrane of the endosome and mostly are delivered to lysosomes enabling degradation of membrane proteins, such as stimulated growth factor receptors, lysosomal enzymes and lipids. It is required for proper accomplishment of various processes including the regulation of endosome size, primary cilium organization, mitotic spindle organization and chromosome segregation, and nuclear envelope sealing and spindle disassembly during anaphase. In conjunction with the ESCRT machinery also appears to function in topologically equivalent membrane fission events, such as the terminal stages of cytokinesis. Involved in cytokinesis: retained at the midbody by ZFYVE19/ANCHR and CHMP4C until abscission checkpoint signaling is terminated at late cytokinesis. It is then released following dephosphorylation of CHMP4C, leading to abscission. VPS4A/B are required for the exosomal release of SDCBP, CD63 and syndecan. Critical for normal erythroblast cytokinesis and correct erythropoiesis. In Mus musculus (Mouse), this protein is Vacuolar protein sorting-associated protein 4A.